A 191-amino-acid chain; its full sequence is Thymidine kinase (191 aa).

Residues 15 to 22 (GPMYSGKT) and 88 to 91 (DEAQ) each bind ATP. The active-site Proton acceptor is the Glu89. Zn(2+) is bound by residues Cys145, Cys148, Cys183, and Cys186.

The protein belongs to the thymidine kinase family. As to quaternary structure, homotetramer.

It is found in the cytoplasm. The enzyme catalyses thymidine + ATP = dTMP + ADP + H(+). In Clostridium botulinum (strain Loch Maree / Type A3), this protein is Thymidine kinase.